Here is a 197-residue protein sequence, read N- to C-terminus: MNQMVSLTSILEHNQRFVSEKKYEPYKTTKFPSKKLVIVTCMDTRLTELLPQAMGLKNGDAKIVKNAGAIVSHPFGSVMRSILVAIYELQAEEVCIVGHHECGMSGLNASSILEKAKERGVEDSCLNLLTSAGLDLKTWLTGFHSVEESVSHSVNMIKNHPLLPKKVPVHGLVIHPETGKLDVVINGYETELINNHS.

Zn(2+) is bound by residues C41, D43, H99, and C102.

This sequence belongs to the beta-class carbonic anhydrase family. Zn(2+) serves as cofactor.

It carries out the reaction hydrogencarbonate + H(+) = CO2 + H2O. In terms of biological role, reversible hydration of carbon dioxide. The protein is Putative carbonic anhydrase YvdA (yvdA) of Bacillus subtilis (strain 168).